The following is a 301-amino-acid chain: POU domain, class 6, transcription factor 1 (301 aa).

Repeat copies occupy residues 11–17 and 50–56. Positions 11–56 are 2 X 7 AA repeats of N-A-Q-G-Q-V-I; it reads NAQGQVIGALPWVVNSASVATPAPAQSLQVQAVTPQLLLNAQGQVI. The tract at residues 66-88 is disordered; that stretch reads QPVAVRKPSTPESPAKSEVQPIQ. The region spanning 139–213 is the POU-specific domain; that stretch reads EDGINLEEIR…VLEKWLNEAE (75 aa). A DNA-binding region (homeobox) is located at residues 234–293; the sequence is KRKRRTSFTPQAIEALNAYFEKNPLPTGQEITEIAKELNYDREVVRVWFCNRRQTLKNTS.

This sequence belongs to the POU transcription factor family. Class-6 subfamily. As to expression, in the embryo, widely expressed, with highest levels in the developing brain and spinal cord. In the adult, mostly found in the brain, where it is diffusely expressed with the exception of an enrichment in layer IV of the neocortex. Also found in kidney, lung, heart, adrenal, skin, and placenta. Low levels in spleen, muscle, liver, anterior pituitary, testis and ovary.

The protein resides in the nucleus. Its function is as follows. Transcription factor that binds preferentially to a variant of the octamer motif (5'-ATGATAAT-3'). This chain is POU domain, class 6, transcription factor 1 (Pou6f1), found in Rattus norvegicus (Rat).